A 72-amino-acid chain; its full sequence is Cytochrome c oxidase subunit 2 (72 aa).

The Mitochondrial intermembrane portion of the chain corresponds to 1-14; it reads MAHPSQLGFQDAAS. Residues 15 to 45 traverse the membrane as a helical segment; that stretch reads PVMEELLHFHDHALMIVFLISTLVLYIIVAM. The Mitochondrial matrix portion of the chain corresponds to 46-72; the sequence is VSTKLTNKYXLDSQEIEVIWTXLPAVI.

This sequence belongs to the cytochrome c oxidase subunit 2 family. As to quaternary structure, component of the cytochrome c oxidase (complex IV, CIV), a multisubunit enzyme composed of 14 subunits. The complex is composed of a catalytic core of 3 subunits MT-CO1, MT-CO2 and MT-CO3, encoded in the mitochondrial DNA, and 11 supernumerary subunits COX4I, COX5A, COX5B, COX6A, COX6B, COX6C, COX7A, COX7B, COX7C, COX8 and NDUFA4, which are encoded in the nuclear genome. The complex exists as a monomer or a dimer and forms supercomplexes (SCs) in the inner mitochondrial membrane with NADH-ubiquinone oxidoreductase (complex I, CI) and ubiquinol-cytochrome c oxidoreductase (cytochrome b-c1 complex, complex III, CIII), resulting in different assemblies (supercomplex SCI(1)III(2)IV(1) and megacomplex MCI(2)III(2)IV(2)). Found in a complex with TMEM177, COA6, COX18, COX20, SCO1 and SCO2. Interacts with TMEM177 in a COX20-dependent manner. Interacts with COX20. Interacts with COX16. Cu cation is required as a cofactor.

It is found in the mitochondrion inner membrane. The enzyme catalyses 4 Fe(II)-[cytochrome c] + O2 + 8 H(+)(in) = 4 Fe(III)-[cytochrome c] + 2 H2O + 4 H(+)(out). Component of the cytochrome c oxidase, the last enzyme in the mitochondrial electron transport chain which drives oxidative phosphorylation. The respiratory chain contains 3 multisubunit complexes succinate dehydrogenase (complex II, CII), ubiquinol-cytochrome c oxidoreductase (cytochrome b-c1 complex, complex III, CIII) and cytochrome c oxidase (complex IV, CIV), that cooperate to transfer electrons derived from NADH and succinate to molecular oxygen, creating an electrochemical gradient over the inner membrane that drives transmembrane transport and the ATP synthase. Cytochrome c oxidase is the component of the respiratory chain that catalyzes the reduction of oxygen to water. Electrons originating from reduced cytochrome c in the intermembrane space (IMS) are transferred via the dinuclear copper A center (CU(A)) of subunit 2 and heme A of subunit 1 to the active site in subunit 1, a binuclear center (BNC) formed by heme A3 and copper B (CU(B)). The BNC reduces molecular oxygen to 2 water molecules using 4 electrons from cytochrome c in the IMS and 4 protons from the mitochondrial matrix. The sequence is that of Cytochrome c oxidase subunit 2 (mt-co2) from Gomphosus varius (Bird wrasse).